The sequence spans 469 residues: Probable Xaa-Pro aminopeptidase PEPP (469 aa).

Mn(2+) is bound by residues Asp265, Asp276, Glu399, and Glu439.

It belongs to the peptidase M24B family. The cofactor is Mn(2+).

It carries out the reaction Release of any N-terminal amino acid, including proline, that is linked to proline, even from a dipeptide or tripeptide.. Functionally, catalyzes the removal of a penultimate prolyl residue from the N-termini of peptides. This chain is Probable Xaa-Pro aminopeptidase PEPP (PEPP), found in Coccidioides posadasii (strain C735) (Valley fever fungus).